The chain runs to 357 residues: Ribosomal RNA large subunit methyltransferase M (357 aa).

Residues Ser183, 216–219 (APGG), Asp235, Asp255, and Asp271 each bind S-adenosyl-L-methionine. Lys300 acts as the Proton acceptor in catalysis.

It belongs to the class I-like SAM-binding methyltransferase superfamily. RNA methyltransferase RlmE family. RlmM subfamily. In terms of assembly, monomer.

Its subcellular location is the cytoplasm. The enzyme catalyses cytidine(2498) in 23S rRNA + S-adenosyl-L-methionine = 2'-O-methylcytidine(2498) in 23S rRNA + S-adenosyl-L-homocysteine + H(+). Functionally, catalyzes the 2'-O-methylation at nucleotide C2498 in 23S rRNA. This is Ribosomal RNA large subunit methyltransferase M from Pseudomonas savastanoi pv. phaseolicola (strain 1448A / Race 6) (Pseudomonas syringae pv. phaseolicola (strain 1448A / Race 6)).